We begin with the raw amino-acid sequence, 1411 residues long: MKMLDLYGYTSIAQSFDKICISIASPESIRAMSYGEIKDISTTNYRTFKVEKGGLFCPKIFGPVNDDECLCGKYRKKRYRGVICEKCGVEVTSSKVRRERMGHIELVSPVAHVWFLKSLPSRIGALLDMPLKLIESILYSGDFVVIDPIATPLSKGEVISESAYNQAKDNYGEDSFIALTGAEAIRELLVRLDLHAINANLRSELESTTSEMKRKKIVKRLRIVENFINSGNKPEWMILTVIPILPPDLRPLVSLENGRPAVSDLNHHYRTIINRNNRLGKLLKLNPPAIMIRNEKRMLQEAVDALFDSTRRSYVSNKAGSVGYKKSLSDMLKGKQGRFRQNLLGKRVDYSGRSVIVVGPNLKLHQCGLPKKMALELFKPFICSKLKMYGIVPTVKLANKMIQNEKPEVWDILDEVIHEHPILLNRAPTLHRLGIQAFDPVLIEGKAIQLHPLVCSAFNADFDGDQMAVHIPLSLEAQLEARILMMSTNNILSPSNGKPIIVPSKDIILGIYYLTLQDYVEPEEILFFGDFSHVEYALHNKDIHICSKIKYKMNYCTDSSDGSGPTYYSKIVETTPGRLMLWQIFPEHKNLTFDLVNQVLTVKEITAIVDLVYRSCGQSETVEFSDKLMSLGFRYASQSGISFGRMDMIIPDTKTMHVDNASEKIKEFAVQYQDGLITKSERYNKVIDEWSKCTDLIAKDMMKAISVYDEESKLNSIYMMAHSGARGSASQMKQLAGMRGLMAKPSGEIIETPIISNFREGLNVFEYFNSTHGARKGLADTALKTANSGYLTRRLVDVAQDCIVVEYDCKTHNGFAMRSVIDGGTVVETLDNIILGRVAAVDIYNPITEELLVNAGELIDEAKVEKIRIAGLDAVKVRSPLTCEAKKGICALCYGRDLAIGDVVSIGEAVGVIAAQSVGEPGTQLTMRTFHVGGTAMRGVETSNLIAMLDAKVKLVNSNVVEDKYGNKIVMSRSCDVVLLDSVGNEKMRHSVPYGARLYVNDGQLVKITEKIADWDPYTMPIITEKTGIIKYMDLIDGVSINEVLDESTGISNRVVVDWKLHLQGANLRPRLVLVNDNGDIITLSSGLEANYFIPIGAVLSVQDGQKVHAGDVITRIPRESIKTRDITGGLPRVIELFEARRPKEHAIVSDIDGYVEFGKDYYRSKRRIFIKPVDDKLSPVEYLVPKGKHTIVNEGDFVHKGDLLMDGDPDPHDILRVLGVEALANYMIAEIQQVYRLQGVRIDNKHIEVILRQMLQKVEIFEPGDTMYLIGENVDVEEVLKTNSNMEKIGKSPAKYIPILQGITRASLDTNSFVSAASFQETTKVLTEAAFSGKEDSLYGLKENVIVGRLIPAGTGFLMNKIKKLSLLNKDDYSMYYNSEYQDLASIEAGHACSVSPSQGVSDTSGAVDY.

Cys-69, Cys-71, Cys-84, and Cys-87 together coordinate Zn(2+). The Mg(2+) site is built by Asp-461, Asp-463, and Asp-465. Residues Cys-809, Cys-883, Cys-890, and Cys-893 each coordinate Zn(2+).

It belongs to the RNA polymerase beta' chain family. In terms of assembly, the RNAP catalytic core consists of 2 alpha, 1 beta, 1 beta' and 1 omega subunit. When a sigma factor is associated with the core the holoenzyme is formed, which can initiate transcription. It depends on Mg(2+) as a cofactor. The cofactor is Zn(2+).

The enzyme catalyses RNA(n) + a ribonucleoside 5'-triphosphate = RNA(n+1) + diphosphate. DNA-dependent RNA polymerase catalyzes the transcription of DNA into RNA using the four ribonucleoside triphosphates as substrates. This chain is DNA-directed RNA polymerase subunit beta', found in Ehrlichia ruminantium (strain Gardel).